A 156-amino-acid polypeptide reads, in one-letter code: SsrA-binding protein (156 aa).

Residues 134–156 (YDKRETLKRKEQDREMARALRKR) form a disordered region.

It belongs to the SmpB family.

The protein localises to the cytoplasm. In terms of biological role, required for rescue of stalled ribosomes mediated by trans-translation. Binds to transfer-messenger RNA (tmRNA), required for stable association of tmRNA with ribosomes. tmRNA and SmpB together mimic tRNA shape, replacing the anticodon stem-loop with SmpB. tmRNA is encoded by the ssrA gene; the 2 termini fold to resemble tRNA(Ala) and it encodes a 'tag peptide', a short internal open reading frame. During trans-translation Ala-aminoacylated tmRNA acts like a tRNA, entering the A-site of stalled ribosomes, displacing the stalled mRNA. The ribosome then switches to translate the ORF on the tmRNA; the nascent peptide is terminated with the 'tag peptide' encoded by the tmRNA and targeted for degradation. The ribosome is freed to recommence translation, which seems to be the essential function of trans-translation. In Latilactobacillus sakei subsp. sakei (strain 23K) (Lactobacillus sakei subsp. sakei), this protein is SsrA-binding protein.